The primary structure comprises 187 residues: Probable nicotinate-nucleotide adenylyltransferase (187 aa).

It belongs to the NadD family.

The enzyme catalyses nicotinate beta-D-ribonucleotide + ATP + H(+) = deamido-NAD(+) + diphosphate. Its pathway is cofactor biosynthesis; NAD(+) biosynthesis; deamido-NAD(+) from nicotinate D-ribonucleotide: step 1/1. In terms of biological role, catalyzes the reversible adenylation of nicotinate mononucleotide (NaMN) to nicotinic acid adenine dinucleotide (NaAD). This Agrobacterium fabrum (strain C58 / ATCC 33970) (Agrobacterium tumefaciens (strain C58)) protein is Probable nicotinate-nucleotide adenylyltransferase.